Consider the following 1755-residue polypeptide: Transposon Ty1-ER1 Gag-Pol polyprotein (1755 aa).

3 stretches are compositionally biased toward polar residues: residues 1 to 23, 48 to 60, and 127 to 152; these read MESQ…SVTS, TKAN…TPAS, and QSQF…GNTF. 3 disordered regions span residues 1–93, 126–174, and 352–421; these read MESQ…MMTQ, PQSQ…PPPM, and GSRN…SKST. Over residues 153-165 the composition is skewed to low complexity; that stretch reads TDSSSADSDMTST. Residues 299 to 401 form an RNA-binding region; it reads NNGIHINNKV…NSKSKTARAH (103 aa). Positions 402-418 are enriched in low complexity; it reads NVSTSNNSPSTDNDSIS. Position 416 is a phosphoserine (S416). D461 acts as the For protease activity; shared with dimeric partner in catalysis. The integrase-type zinc finger-like stretch occupies residues 583–640; sequence NVHTSESTRKYPYPFIHRMLAHANAQTIRYSLKNNTITYFNESDVDWSSAIDYQCPDC. In terms of domain architecture, Integrase catalytic spans 660 to 835; sequence NSYEPFQYLH…AGLDISTLLP (176 aa). Residues D671 and D736 each contribute to the Mg(2+) site. Disordered regions lie at residues 956 to 1087, 1092 to 1111, and 1130 to 1171; these read SKAV…ETEK, RSPS…NIVP, and DLPL…DSNA. Positions 960–969 are enriched in low complexity; it reads SPTDSTPPST. Polar residues predominate over residues 1005-1015; that stretch reads STPQISNIEST. Residues 1038–1053 are compositionally biased toward basic and acidic residues; that stretch reads ESSHASKSKDFRHSDS. Polar residues-rich tracts occupy residues 1054 to 1082 and 1101 to 1111; these read YSEN…QISD and PENNSSHNIVP. The Bipartite nuclear localization signal motif lies at 1178–1212; it reads KKRSLEDNETEIKVSRDTWNTKNMRSLEPPRSKKR. A Reverse transcriptase Ty1/copia-type domain is found at 1338–1476; that stretch reads NNYYITQLDI…DILGLEIKYQ (139 aa). Mg(2+) contacts are provided by D1346, D1427, D1428, D1610, E1652, and D1685. The 143-residue stretch at 1610–1752 folds into the RNase H Ty1/copia-type domain; sequence DASYGNQPYY…IKTFKLLTNK (143 aa).

The capsid protein forms a homotrimer, from which the VLPs are assembled. The protease is a homodimer, whose active site consists of two apposed aspartic acid residues. Post-translationally, initially, virus-like particles (VLPs) are composed of the structural unprocessed proteins Gag and Gag-Pol, and also contain the host initiator methionine tRNA (tRNA(i)-Met) which serves as a primer for minus-strand DNA synthesis, and a dimer of genomic Ty RNA. Processing of the polyproteins occurs within the particle and proceeds by an ordered pathway, called maturation. First, the protease (PR) is released by autocatalytic cleavage of the Gag-Pol polyprotein yielding capsid protein p45 and a Pol-p154 precursor protein. This cleavage is a prerequisite for subsequent processing of Pol-p154 at the remaining sites to release the mature structural and catalytic proteins. Maturation takes place prior to the RT reaction and is required to produce transposition-competent VLPs.

The protein resides in the cytoplasm. It is found in the nucleus. The catalysed reaction is DNA(n) + a 2'-deoxyribonucleoside 5'-triphosphate = DNA(n+1) + diphosphate. The enzyme catalyses Endonucleolytic cleavage to 5'-phosphomonoester.. In terms of biological role, capsid protein (CA) is the structural component of the virus-like particle (VLP), forming the shell that encapsulates the retrotransposons dimeric RNA genome. The particles are assembled from trimer-clustered units and there are holes in the capsid shells that allow for the diffusion of macromolecules. CA also has nucleocapsid-like chaperone activity, promoting primer tRNA(i)-Met annealing to the multipartite primer-binding site (PBS), dimerization of Ty1 RNA and initiation of reverse transcription. The aspartyl protease (PR) mediates the proteolytic cleavages of the Gag and Gag-Pol polyproteins after assembly of the VLP. Functionally, reverse transcriptase/ribonuclease H (RT) is a multifunctional enzyme that catalyzes the conversion of the retro-elements RNA genome into dsDNA within the VLP. The enzyme displays a DNA polymerase activity that can copy either DNA or RNA templates, and a ribonuclease H (RNase H) activity that cleaves the RNA strand of RNA-DNA heteroduplexes during plus-strand synthesis and hydrolyzes RNA primers. The conversion leads to a linear dsDNA copy of the retrotransposon that includes long terminal repeats (LTRs) at both ends. Its function is as follows. Integrase (IN) targets the VLP to the nucleus, where a subparticle preintegration complex (PIC) containing at least integrase and the newly synthesized dsDNA copy of the retrotransposon must transit the nuclear membrane. Once in the nucleus, integrase performs the integration of the dsDNA into the host genome. The protein is Transposon Ty1-ER1 Gag-Pol polyprotein (TY1B-ER1) of Saccharomyces cerevisiae (strain ATCC 204508 / S288c) (Baker's yeast).